A 178-amino-acid polypeptide reads, in one-letter code: ATP synthase subunit delta (178 aa).

Belongs to the ATPase delta chain family. As to quaternary structure, F-type ATPases have 2 components, F(1) - the catalytic core - and F(0) - the membrane proton channel. F(1) has five subunits: alpha(3), beta(3), gamma(1), delta(1), epsilon(1). F(0) has three main subunits: a(1), b(2) and c(10-14). The alpha and beta chains form an alternating ring which encloses part of the gamma chain. F(1) is attached to F(0) by a central stalk formed by the gamma and epsilon chains, while a peripheral stalk is formed by the delta and b chains.

It localises to the cell inner membrane. In terms of biological role, f(1)F(0) ATP synthase produces ATP from ADP in the presence of a proton or sodium gradient. F-type ATPases consist of two structural domains, F(1) containing the extramembraneous catalytic core and F(0) containing the membrane proton channel, linked together by a central stalk and a peripheral stalk. During catalysis, ATP synthesis in the catalytic domain of F(1) is coupled via a rotary mechanism of the central stalk subunits to proton translocation. Its function is as follows. This protein is part of the stalk that links CF(0) to CF(1). It either transmits conformational changes from CF(0) to CF(1) or is implicated in proton conduction. This Methylobacillus flagellatus (strain ATCC 51484 / DSM 6875 / VKM B-1610 / KT) protein is ATP synthase subunit delta.